Consider the following 254-residue polypeptide: uncharacterized protein (254 aa).

The next 5 membrane-spanning stretches (helical) occupy residues 33 to 53 (MLWV…LFFI), 70 to 90 (FNKL…LFKS), 92 to 112 (FALS…LNFM), 133 to 153 (FIIF…ILLI), and 223 to 243 (FLVF…PLIF).

The protein to M.jannaschii MJ0902.

Its subcellular location is the cell membrane. This is an uncharacterized protein from Methanocaldococcus jannaschii (strain ATCC 43067 / DSM 2661 / JAL-1 / JCM 10045 / NBRC 100440) (Methanococcus jannaschii).